Here is a 736-residue protein sequence, read N- to C-terminus: Putative ATP-dependent RNA helicase CG14443 (736 aa).

4 disordered regions span residues 32–58 (TKSSIWGSSASDISGQSRSLKSSSSVL), 73–166 (GIEG…GERP), 183–237 (NSFK…NSWR), and 265–296 (SFTRSRSPHRNTLCYQDQSKNPSRPSNYNTWK). 2 stretches are compositionally biased toward low complexity: residues 34–58 (SSIWGSSASDISGQSRSLKSSSSVL) and 125–160 (SSESAHSSGSESSSSDSNSGSSSDSDSTTGSSSHGS). Positions 190–199 (TSRENKESRS) are enriched in basic and acidic residues. The span at 277–296 (LCYQDQSKNPSRPSNYNTWK) shows a compositional bias: polar residues. The Q motif motif lies at 330–358 (LSFERSGFNATILQQLEDQGYDGPTPIQA). A Helicase ATP-binding domain is found at 361–534 (WSIAKEGKNI…NKFLGQYTAI (174 aa)). 374–381 (SGKGTGKT) serves as a coordination point for ATP. The DEAD box signature appears at 482–485 (DNID). One can recognise a Helicase C-terminal domain in the interval 561-719 (KVERLMKELT…LLQLAEEKMF (159 aa)).

It belongs to the DEAD box helicase family.

It carries out the reaction ATP + H2O = ADP + phosphate + H(+). In terms of biological role, probable ATP-binding RNA helicase. This is Putative ATP-dependent RNA helicase CG14443 from Drosophila melanogaster (Fruit fly).